The sequence spans 349 residues: UDP-glucose 4-epimerase (349 aa).

Residues 10 to 12 (GFI), 31 to 35 (DNFAN), 66 to 67 (DV), and Lys92 each bind NAD(+). Substrate is bound at residue 132–134 (SAT). Residue Tyr158 is the Proton acceptor of the active site. NAD(+)-binding residues include Lys162 and Tyr186. Residues 186–188 (YFN), 207–209 (NNL), 225–227 (TIY), Arg240, and 303–306 (RPGD) each bind substrate.

This sequence belongs to the NAD(P)-dependent epimerase/dehydratase family. The cofactor is NAD(+). Expressed in gonads, vulva, intestine, hypdermis and nervous system.

It carries out the reaction UDP-alpha-D-glucose = UDP-alpha-D-galactose. The catalysed reaction is UDP-N-acetyl-alpha-D-glucosamine = UDP-N-acetyl-alpha-D-galactosamine. The protein operates within carbohydrate metabolism; galactose metabolism. In terms of biological role, catalyzes two distinct but analogous reactions: the reversible epimerization of UDP-glucose to UDP-galactose and the reversible epimerization of UDP-N-acetylglucosamine to UDP-N-acetylgalactosamine. The reaction with UDP-Gal plays a critical role in the Leloir pathway of galactose catabolism in which galactose is converted to the glycolytic intermediate glucose 6-phosphate. It contributes to the catabolism of dietary galactose and enables the endogenous biosynthesis of both UDP-Gal and UDP-GalNAc when exogenous sources are limited. Both UDP-sugar interconversions are important for the synthesis of glycoproteins and glycolipids. The polypeptide is UDP-glucose 4-epimerase (Caenorhabditis elegans).